A 330-amino-acid chain; its full sequence is Putative zinc finger protein CONSTANS-LIKE 11 (330 aa).

Residues C5, C8, C28, and H33 each contribute to the Zn(2+) site. The B box-type 1; atypical zinc-finger motif lies at 5-47 (CDFCGTEKALIYCKSDSAKLCLNCDVNVHSANPLSQRHTRSLL). The segment at 48–88 (CEKCSLQPTAVHCMNENVSLCQGCQWTASNCTGLGHRLQSL) adopts a B box-type 2; degenerate zinc-finger fold. Residues 276 to 318 (RDEAKKRYKQKKSKRMFGKQIRYASRKARADTRKRVKGRFVKS) form the CCT domain.

It belongs to the CONSTANS family.

The protein resides in the nucleus. This chain is Putative zinc finger protein CONSTANS-LIKE 11 (COL11), found in Arabidopsis thaliana (Mouse-ear cress).